The sequence spans 257 residues: 5'-nucleotidase SurE (257 aa).

4 residues coordinate a divalent metal cation: Asp-15, Asp-16, Ser-46, and Asn-99.

The protein belongs to the SurE nucleotidase family. A divalent metal cation is required as a cofactor.

It localises to the cytoplasm. The enzyme catalyses a ribonucleoside 5'-phosphate + H2O = a ribonucleoside + phosphate. Its function is as follows. Nucleotidase that shows phosphatase activity on nucleoside 5'-monophosphates. In Aliivibrio fischeri (strain ATCC 700601 / ES114) (Vibrio fischeri), this protein is 5'-nucleotidase SurE.